Reading from the N-terminus, the 372-residue chain is MDVESRLSLILRYPAEEVITVEELKEILQAGYKLNHYIGFEISGFIHIGTGVVSMSKVVDLQKAGVRTQILLADIHSWLNNKLGGDLETIRRVAVTYYVETFKKIIEVLGGDPDGTRFVLGSDLYHHNDEYWLLLMDITRHLTLSQVRHSLTILGRKMGESIPLAYLVYPPLQVADVFALGAHIPHGGIDQRRAHILAREVAHKIRFYPLEVDGKRVKPVALHHRLLPALNISAKPASKEELSELKMSKSIPQSAIFVHDSPEEIKQKIAKAYCPPREVEYNPVLELLRVSAFREERKTPFVIRRPAQYGGDVEVWSYQELEGLYREGKIHPADLKNAAAEALAGLLEPVYKFFQGPGAKLLEEMKNITITR.

5 residues coordinate L-tyrosine: tyrosine 37, tyrosine 169, glutamine 173, aspartate 176, and glutamine 191. The 'KMSKS' region motif lies at 246–250 (KMSKS). An ATP-binding site is contributed by lysine 249.

Belongs to the class-I aminoacyl-tRNA synthetase family. TyrS type 4 subfamily. As to quaternary structure, homodimer.

Its subcellular location is the cytoplasm. The catalysed reaction is tRNA(Tyr) + L-tyrosine + ATP = L-tyrosyl-tRNA(Tyr) + AMP + diphosphate + H(+). Catalyzes the attachment of tyrosine to tRNA(Tyr) in a two-step reaction: tyrosine is first activated by ATP to form Tyr-AMP and then transferred to the acceptor end of tRNA(Tyr). This Pyrobaculum arsenaticum (strain DSM 13514 / JCM 11321 / PZ6) protein is Tyrosine--tRNA ligase.